Here is a 531-residue protein sequence, read N- to C-terminus: O-phosphoserine--tRNA(Cys) ligase (531 aa).

Residues 189-191 (HMT), 234-236 (SAS), 276-277 (YY), and Asn319 each bind substrate.

It belongs to the class-II aminoacyl-tRNA synthetase family. O-phosphoseryl-tRNA(Cys) synthetase subfamily. In terms of assembly, homotetramer. Interacts with SepCysS.

It carries out the reaction tRNA(Cys) + O-phospho-L-serine + ATP = O-phospho-L-seryl-tRNA(Cys) + AMP + diphosphate. Catalyzes the attachment of O-phosphoserine (Sep) to tRNA(Cys). The chain is O-phosphoserine--tRNA(Cys) ligase from Methanospirillum hungatei JF-1 (strain ATCC 27890 / DSM 864 / NBRC 100397 / JF-1).